The primary structure comprises 251 residues: Cell division protein ZapD (251 aa).

The protein belongs to the ZapD family. In terms of assembly, interacts with FtsZ.

The protein resides in the cytoplasm. Functionally, cell division factor that enhances FtsZ-ring assembly. Directly interacts with FtsZ and promotes bundling of FtsZ protofilaments, with a reduction in FtsZ GTPase activity. The protein is Cell division protein ZapD of Janthinobacterium sp. (strain Marseille) (Minibacterium massiliensis).